The following is a 365-amino-acid chain: DNA replication and repair protein RecF (365 aa).

Position 30–37 (G30–T37) interacts with ATP.

Belongs to the RecF family.

Its subcellular location is the cytoplasm. Functionally, the RecF protein is involved in DNA metabolism; it is required for DNA replication and normal SOS inducibility. RecF binds preferentially to single-stranded, linear DNA. It also seems to bind ATP. This chain is DNA replication and repair protein RecF, found in Leptospira borgpetersenii serovar Hardjo-bovis (strain JB197).